The primary structure comprises 443 residues: Thymidine phosphorylase (443 aa).

Belongs to the thymidine/pyrimidine-nucleoside phosphorylase family. Homodimer.

The catalysed reaction is thymidine + phosphate = 2-deoxy-alpha-D-ribose 1-phosphate + thymine. The protein operates within pyrimidine metabolism; dTMP biosynthesis via salvage pathway; dTMP from thymine: step 1/2. Its function is as follows. The enzymes which catalyze the reversible phosphorolysis of pyrimidine nucleosides are involved in the degradation of these compounds and in their utilization as carbon and energy sources, or in the rescue of pyrimidine bases for nucleotide synthesis. The chain is Thymidine phosphorylase from Aliivibrio salmonicida (strain LFI1238) (Vibrio salmonicida (strain LFI1238)).